The following is a 430-amino-acid chain: Microtubule-associated protein tau (430 aa).

The segment covering 1–16 (MAEPRQEFDTAEDHAE) has biased composition (basic and acidic residues). Residues 1 to 245 (MAEPRQEFDT…PVPMPDLKNV (245 aa)) form a disordered region. Alanine 2 is modified (N-acetylalanine). Tyrosine 18 carries the phosphotyrosine modification. A Glycyl lysine isopeptide (Lys-Gly) (interchain with G-Cter in ubiquitin) cross-link involves residue lysine 31. Phosphoserine is present on residues serine 33 and serine 48. Positions 48–58 (SETSDAKSTPT) are enriched in polar residues. Threonine 56, threonine 58, and threonine 98 each carry phosphothreonine. Over residues 117–133 (KGKEGTGSEDRKAKGAD) the composition is skewed to basic and acidic residues. A Phosphothreonine modification is found at threonine 142. Arginine 144 carries the omega-N-methylarginine modification. Residue lysine 152 is modified to N6,N6-dimethyllysine; alternate. N6-acetyllysine; alternate is present on lysine 152. 4 positions are modified to phosphothreonine: threonine 158, threonine 164, threonine 165, and threonine 170. A compositionally biased stretch (low complexity) spans 161 to 203 (PAKTTPSPKTPPGTGEPAKSGDRSGYSSPGSPGTPGSRSRTPS). Phosphoserine occurs at positions 180 and 184. Tyrosine 186 carries the phosphotyrosine modification. Serine 187, serine 188, and serine 191 each carry phosphoserine. A phosphothreonine mark is found at threonine 194 and threonine 201. A Phosphoserine modification is found at serine 203. Residue threonine 206 is modified to Phosphothreonine. An N6-acetyllysine modification is found at lysine 214. The residue at position 220 (threonine 220) is a Phosphothreonine. 2 positions are modified to phosphoserine: serine 224 and serine 226. Tau/MAP repeat units lie at residues 233–263 (QTAP…GGGK), 264–294 (VQII…GGGS), 295–325 (VQIV…GGGQ), and 326–357 (VEVK…GGGN). A Glycyl lysine isopeptide (Lys-Gly) (interchain with G-Cter in ubiquitin) cross-link involves residue lysine 243. An N6-acetyllysine; alternate modification is found at lysine 248. An N6-methyllysine; alternate modification is found at lysine 248. Lysine 248 is covalently cross-linked (Glycyl lysine isopeptide (Lys-Gly) (interchain with G-Cter in ubiquitin); alternate). Phosphoserine is present on serine 251. Lysine 256 participates in a covalent cross-link: Glycyl lysine isopeptide (Lys-Gly) (interchain with G-Cter in ubiquitin). The residue at position 270 (lysine 270) is an N6-acetyllysine; alternate. Residue lysine 270 forms a Glycyl lysine isopeptide (Lys-Gly) (interchain with G-Cter in ubiquitin); alternate linkage. Phosphoserine occurs at positions 274 and 278. The residue at position 279 (lysine 279) is an N6-acetyllysine. A disulfide bridge links cysteine 280 with cysteine 311. Position 282 is a phosphoserine (serine 282). Residue lysine 287 is modified to N6-acetyllysine; alternate. Lysine 287 is covalently cross-linked (Glycyl lysine isopeptide (Lys-Gly) (interchain with G-Cter in ubiquitin); alternate). Serine 294 carries the post-translational modification Phosphoserine. Lysine 300 is subject to N6,N6-dimethyllysine; alternate. Lysine 300, lysine 306, and lysine 310 each carry N6-acetyllysine; alternate. Residues lysine 300, lysine 306, and lysine 310 each participate in a glycyl lysine isopeptide (Lys-Gly) (interchain with G-Cter in ubiquitin); alternate cross-link. Serine 313 is modified (phosphoserine). N6-acetyllysine; alternate is present on residues lysine 320, lysine 332, and lysine 336. Residues lysine 320, lysine 332, and lysine 336 each participate in a glycyl lysine isopeptide (Lys-Gly) (interchain with G-Cter in ubiquitin); alternate cross-link. At arginine 338 the chain carries Omega-N-methylarginine. A Phosphoserine modification is found at serine 341. Lysine 342 participates in a covalent cross-link: Glycyl lysine isopeptide (Lys-Gly) (interchain with G-Cter in ubiquitin). Serine 345 carries the post-translational modification Phosphoserine. N6-acetyllysine; alternate is present on lysine 358. A Glycyl lysine isopeptide (Lys-Gly) (interchain with G-Cter in ubiquitin); alternate cross-link involves residue lysine 358. Lysine 364 participates in a covalent cross-link: Glycyl lysine isopeptide (Lys-Gly) (interchain with G-Cter in ubiquitin). An N6-acetyllysine; alternate modification is found at lysine 374. Lysine 374 participates in a covalent cross-link: Glycyl lysine isopeptide (Lys-Gly) (interchain with G-Cter in ubiquitin); alternate. Phosphotyrosine is present on tyrosine 383. Residues serine 385 and serine 389 each carry the phosphoserine modification. The segment at 387–406 (VVSGDTSPRHLSNVSSTGSI) is disordered. The segment covering 390–406 (GDTSPRHLSNVSSTGSI) has biased composition (polar residues). Phosphothreonine is present on threonine 392. Phosphoserine is present on residues serine 393, serine 398, serine 405, and serine 411. At threonine 416 the chain carries Phosphothreonine.

Interacts with MARK1, MARK2, MARK3 and MARK4. Interacts with SQSTM1 when polyubiquitinated. Interacts with PSMC2 through SQSTM1. Interacts with FKBP4. Binds to CSNK1D. Interacts with SGK1. Interacts with PIN1. Interacts with LRRK2. Interacts with LRP1, leading to endocytosis; this interaction is reduced in the presence of LRPAP1/RAP. Polyubiquitinated. Requires functional TRAF6 and may provoke SQSTM1-dependent degradation by the proteasome. Post-translationally, phosphorylation at various serine and threonine residues in S-P or T-P motifs by proline-directed protein kinases (PDPK1, CDK1, CDK5, GSK3, MAPK) (a few sites per protein in interphase, more in mitosis), and at serine residues in K-X-G-S motifs by MAP/microtubule affinity-regulating kinase (MARK1, MARK2, MARK3 or MARK4), causing detachment from microtubules, and their disassembly. Phosphorylation at Ser-345 by BRSK1 and BRSK2 in neurons affects ability to bind microtubules and plays a role in neuron polarization. Phosphorylated by PHK. Dephosphorylation at several serine and threonine residues by the serine/threonine phosphatase PPP5C. In terms of processing, hyperphosphorylated (in particular at Thr-170, Ser-191, Thr-194, Ser-251, and Ser-345) during hibernation. Phosphorylation is fully reversible after arousal. Highly phosphorylated tau contains a number of paired helical filaments (PHFs)-like epitopes. PHF-like phosphorylation is not associated with fibril formation. Distribution of PHF-like tau is more intense in the entorhinal cortex, hippocampus and isocortical areas. PHF-like phosphorylation-dephosphorylation during hibernation cycle is synchronized with regression-re-establishment of afferentation. It may reflect a protective mechanism in an unfavorable environment.

It localises to the cytoplasm. Its subcellular location is the cytosol. The protein localises to the cell membrane. It is found in the cytoskeleton. The protein resides in the cell projection. It localises to the axon. Its subcellular location is the dendrite. In terms of biological role, promotes microtubule assembly and stability, and might be involved in the establishment and maintenance of neuronal polarity. The C-terminus binds axonal microtubules while the N-terminus binds neural plasma membrane components, suggesting that tau functions as a linker protein between both. Axonal polarity is predetermined by tau localization (in the neuronal cell) in the domain of the cell body defined by the centrosome. The short isoforms allow plasticity of the cytoskeleton whereas the longer isoforms may preferentially play a role in its stabilization. The polypeptide is Microtubule-associated protein tau (MAPT) (Spermophilus citellus (European ground squirrel)).